A 685-amino-acid polypeptide reads, in one-letter code: Iron(3+)-hydroxamate import system permease protein FhuB (685 aa).

The next 18 membrane-spanning stretches (helical) occupy residues 35–55 (ALLL…NFSV), 87–107 (LAIS…FQQV), 120–140 (VATG…PGAL), 143–163 (QFAA…VAWG), 172–192 (ILAG…LVIF), 222–242 (QLLG…LMGL), 265–285 (AIVL…IGLF), 302–322 (LMLA…IILW), 328–348 (MEVS…LWLL), 373–393 (LAFA…ALSF), 416–436 (WPRI…GCII), 456–476 (AAFG…GWLL), 479–499 (GSLG…RGGF), 504–524 (MLLA…MLQA), 553–573 (AIVM…LTIL), 592–612 (IALL…IGPL), 632–652 (MPHM…ADWC), and 660–680 (YQIP…IYLL).

This sequence belongs to the binding-protein-dependent transport system permease family. FecCD subfamily. As to quaternary structure, the complex is composed of two ATP-binding proteins (FhuC), a transmembrane protein (FhuB) and a solute-binding protein (FhuD).

Its subcellular location is the cell inner membrane. In terms of biological role, part of the ABC transporter complex FhuCDB involved in iron(3+)-hydroxamate import. Responsible for the translocation of the substrate across the membrane. Involved in ferrioxamine-mediated iron(III) utilization. The sequence is that of Iron(3+)-hydroxamate import system permease protein FhuB (fhuB) from Salmonella typhimurium (strain LT2 / SGSC1412 / ATCC 700720).